A 463-amino-acid polypeptide reads, in one-letter code: NADH-quinone oxidoreductase subunit N (463 aa).

14 helical membrane passes run 2 to 22, 25 to 45, 61 to 81, 91 to 110, 114 to 133, 149 to 169, 189 to 209, 223 to 243, 264 to 284, 292 to 312, 317 to 337, 362 to 382, 395 to 415, and 434 to 454; these read NTLIAITGLGIFCLLFEILNF, GIVPFTILGLLGVLALNFYEF, FSTAFSSLFIILTIFLVALSH, ISDFIAIKVFLLAGAVAMVS, LAMFFLGIEILSIALYVLAA, FLMGSFASGIILFGICLIYGA, IWFPIGMILMTIGMFFKIAAV, PALTTALMSTLAKVVAIATLF, FTNVILTISIASMTVGNIMAL, MLAFSGISHAGFMLMTFLTIA, VLLYYTAAYALAGIAAFSVIL, AAILTGSLLSMGGIPIFSGFF, GYVAIVIAAVINSIISVGYYF, and PFLIYAVAIISIGLNIALGLF.

This sequence belongs to the complex I subunit 2 family. NDH-1 is composed of 14 different subunits. Subunits NuoA, H, J, K, L, M, N constitute the membrane sector of the complex.

Its subcellular location is the cell inner membrane. The catalysed reaction is a quinone + NADH + 5 H(+)(in) = a quinol + NAD(+) + 4 H(+)(out). NDH-1 shuttles electrons from NADH, via FMN and iron-sulfur (Fe-S) centers, to quinones in the respiratory chain. The immediate electron acceptor for the enzyme in this species is believed to be a menaquinone. Couples the redox reaction to proton translocation (for every two electrons transferred, four hydrogen ions are translocated across the cytoplasmic membrane), and thus conserves the redox energy in a proton gradient. This chain is NADH-quinone oxidoreductase subunit N, found in Flavobacterium johnsoniae (strain ATCC 17061 / DSM 2064 / JCM 8514 / BCRC 14874 / CCUG 350202 / NBRC 14942 / NCIMB 11054 / UW101) (Cytophaga johnsonae).